Consider the following 319-residue polypeptide: MSLNFLEFEKPIAELEAKVEALREISRRGDENALDLEKEIKQLEDKCLELKKKTFSDLGAWEVAQLARHPERPYVLDYIEHMFTEFDELAGDRAFADDKALVGGIARLDGRPVMVIGHQKGRGTKEKVIRNFGMPKPEGYRKAKRLMQMAERFNMPVITFIDTAGAYPGVGAEERGQSEAIAMNLKIMSELSVPVICNVVGEGGSGGALAIGVGDYVNMLQYSTYSVISPEGCASILWRDSDKAPQAAEAMGLVAPRLKELELIDTIIDEPLGGAHRDHKATAENIKQRLLEQLKELDAFDNEALLERRYQRLMSYGYC.

The region spanning aspartate 35–glutamate 296 is the CoA carboxyltransferase C-terminal domain.

Belongs to the AccA family. Acetyl-CoA carboxylase is a heterohexamer composed of biotin carboxyl carrier protein (AccB), biotin carboxylase (AccC) and two subunits each of ACCase subunit alpha (AccA) and ACCase subunit beta (AccD).

Its subcellular location is the cytoplasm. The catalysed reaction is N(6)-carboxybiotinyl-L-lysyl-[protein] + acetyl-CoA = N(6)-biotinyl-L-lysyl-[protein] + malonyl-CoA. It participates in lipid metabolism; malonyl-CoA biosynthesis; malonyl-CoA from acetyl-CoA: step 1/1. Functionally, component of the acetyl coenzyme A carboxylase (ACC) complex. First, biotin carboxylase catalyzes the carboxylation of biotin on its carrier protein (BCCP) and then the CO(2) group is transferred by the carboxyltransferase to acetyl-CoA to form malonyl-CoA. The polypeptide is Acetyl-coenzyme A carboxylase carboxyl transferase subunit alpha (Aliivibrio fischeri (strain MJ11) (Vibrio fischeri)).